Here is a 208-residue protein sequence, read N- to C-terminus: Small ribosomal subunit protein eS8 (208 aa).

The segment at 1–40 (MGISRDNWHKRRKTGGKRKPVHKKRKYELGRPPSNTKLGP) is disordered. The span at 8–26 (WHKRRKTGGKRKPVHKKRK) shows a compositional bias: basic residues.

This sequence belongs to the eukaryotic ribosomal protein eS8 family. In terms of assembly, component of the small ribosomal subunit.

It localises to the cytoplasm. Its function is as follows. Component of the small ribosomal subunit. The ribosome is a large ribonucleoprotein complex responsible for the synthesis of proteins in the cell. This is Small ribosomal subunit protein eS8 (rps8) from Ictalurus punctatus (Channel catfish).